The primary structure comprises 65 residues: Small ribosomal subunit protein eS27 (65 aa).

4 residues coordinate Zn(2+): C21, C24, C40, and C43. The segment at 21–43 (CKDCGNVQVVFARPSSVVTCNIC) adopts a C4-type zinc-finger fold.

The protein belongs to the eukaryotic ribosomal protein eS27 family. Part of the 30S ribosomal subunit. Zn(2+) is required as a cofactor.

The chain is Small ribosomal subunit protein eS27 from Thermoplasma volcanium (strain ATCC 51530 / DSM 4299 / JCM 9571 / NBRC 15438 / GSS1).